The primary structure comprises 530 residues: tRNA-2-methylthio-N(6)-dimethylallyladenosine synthase (530 aa).

An MTTase N-terminal domain is found at 19–134 (RTYEVRTYGC…LPTLLERARH (116 aa)). Cys-28, Cys-63, Cys-97, Cys-171, Cys-175, and Cys-178 together coordinate [4Fe-4S] cluster. The Radical SAM core domain maps to 157 to 387 (RDEIASGWVS…TALQERISHE (231 aa)). A TRAM domain is found at 390–460 (QRVVGRTVEV…PFHLIADSVD (71 aa)). The tract at residues 509-530 (VPTTASTSAPVGDGSAHPRHRA) is disordered.

This sequence belongs to the methylthiotransferase family. MiaB subfamily. In terms of assembly, monomer. The cofactor is [4Fe-4S] cluster.

It is found in the cytoplasm. It catalyses the reaction N(6)-dimethylallyladenosine(37) in tRNA + (sulfur carrier)-SH + AH2 + 2 S-adenosyl-L-methionine = 2-methylsulfanyl-N(6)-dimethylallyladenosine(37) in tRNA + (sulfur carrier)-H + 5'-deoxyadenosine + L-methionine + A + S-adenosyl-L-homocysteine + 2 H(+). Functionally, catalyzes the methylthiolation of N6-(dimethylallyl)adenosine (i(6)A), leading to the formation of 2-methylthio-N6-(dimethylallyl)adenosine (ms(2)i(6)A) at position 37 in tRNAs that read codons beginning with uridine. In Clavibacter sepedonicus (Clavibacter michiganensis subsp. sepedonicus), this protein is tRNA-2-methylthio-N(6)-dimethylallyladenosine synthase.